Consider the following 278-residue polypeptide: Large ribosomal subunit protein uL2 (278 aa).

Disordered regions lie at residues 32–57 (ALTE…IGGG) and 221–278 (RGVA…KKKR). The span at 269 to 278 (IRSRHAKKKR) shows a compositional bias: basic residues.

This sequence belongs to the universal ribosomal protein uL2 family. As to quaternary structure, part of the 50S ribosomal subunit. Forms a bridge to the 30S subunit in the 70S ribosome.

One of the primary rRNA binding proteins. Required for association of the 30S and 50S subunits to form the 70S ribosome, for tRNA binding and peptide bond formation. It has been suggested to have peptidyltransferase activity; this is somewhat controversial. Makes several contacts with the 16S rRNA in the 70S ribosome. In Zymomonas mobilis subsp. mobilis (strain ATCC 31821 / ZM4 / CP4), this protein is Large ribosomal subunit protein uL2.